Here is a 125-residue protein sequence, read N- to C-terminus: Glycine cleavage system H protein (125 aa).

Residues 19-101 form the Lipoyl-binding domain; the sequence is VGTVGISDYA…EGAAWFFKLT (83 aa). Position 60 is an N6-lipoyllysine (lysine 60).

This sequence belongs to the GcvH family. As to quaternary structure, the glycine cleavage system is composed of four proteins: P, T, L and H. (R)-lipoate is required as a cofactor.

In terms of biological role, the glycine cleavage system catalyzes the degradation of glycine. The H protein shuttles the methylamine group of glycine from the P protein to the T protein. The protein is Glycine cleavage system H protein of Paramagnetospirillum magneticum (strain ATCC 700264 / AMB-1) (Magnetospirillum magneticum).